Consider the following 285-residue polypeptide: Ribosomal RNA small subunit methyltransferase I (285 aa).

The protein belongs to the methyltransferase superfamily. RsmI family.

The protein resides in the cytoplasm. The catalysed reaction is cytidine(1402) in 16S rRNA + S-adenosyl-L-methionine = 2'-O-methylcytidine(1402) in 16S rRNA + S-adenosyl-L-homocysteine + H(+). Catalyzes the 2'-O-methylation of the ribose of cytidine 1402 (C1402) in 16S rRNA. This Buchnera aphidicola subsp. Schizaphis graminum (strain Sg) protein is Ribosomal RNA small subunit methyltransferase I.